We begin with the raw amino-acid sequence, 412 residues long: Trehalose synthase (412 aa).

The protein belongs to the glycosyltransferase group 1 family. Glycosyltransferase 4 subfamily. As to quaternary structure, homodimer. Mg(2+) serves as cofactor.

It catalyses the reaction an NDP-alpha-D-glucose + D-glucose = alpha,alpha-trehalose + a ribonucleoside 5'-diphosphate + H(+). In terms of biological role, synthesizes trehalose from ADP-glucose and glucose. Has a much lower activity toward UDP-glucose and GDP-glucose. The reaction is reversible, the equilibrium strongly favors trehalose synthesis. This chain is Trehalose synthase, found in Pyrococcus furiosus (strain ATCC 43587 / DSM 3638 / JCM 8422 / Vc1).